The following is a 395-amino-acid chain: 1-deoxy-D-xylulose 5-phosphate reductoisomerase (395 aa).

Residues Thr10, Gly11, Ser12, Ile13, Arg37, Gln38, and Asn124 each contribute to the NADPH site. Lys125 is a binding site for 1-deoxy-D-xylulose 5-phosphate. Residue Glu126 coordinates NADPH. Position 150 (Asp150) interacts with Mn(2+). 4 residues coordinate 1-deoxy-D-xylulose 5-phosphate: Ser151, Glu152, Ser179, and His202. Position 152 (Glu152) interacts with Mn(2+). Gly208 is a binding site for NADPH. The 1-deoxy-D-xylulose 5-phosphate site is built by Ser215, Asn220, Lys221, and Glu224. Glu224 serves as a coordination point for Mn(2+).

The protein belongs to the DXR family. Mg(2+) serves as cofactor. It depends on Mn(2+) as a cofactor.

It catalyses the reaction 2-C-methyl-D-erythritol 4-phosphate + NADP(+) = 1-deoxy-D-xylulose 5-phosphate + NADPH + H(+). Its pathway is isoprenoid biosynthesis; isopentenyl diphosphate biosynthesis via DXP pathway; isopentenyl diphosphate from 1-deoxy-D-xylulose 5-phosphate: step 1/6. In terms of biological role, catalyzes the NADPH-dependent rearrangement and reduction of 1-deoxy-D-xylulose-5-phosphate (DXP) to 2-C-methyl-D-erythritol 4-phosphate (MEP). The sequence is that of 1-deoxy-D-xylulose 5-phosphate reductoisomerase from Cupriavidus pinatubonensis (strain JMP 134 / LMG 1197) (Cupriavidus necator (strain JMP 134)).